A 342-amino-acid polypeptide reads, in one-letter code: tRNA-specific 2-thiouridylase MnmA (342 aa).

ATP contacts are provided by residues 6–13 and Leu32; that span reads GMSGGVDS. Cys99 (nucleophile) is an active-site residue. A disulfide bridge links Cys99 with Cys190. Gly124 provides a ligand contact to ATP. Residues 140–142 form an interaction with tRNA region; it reads KDQ. Cys190 acts as the Cysteine persulfide intermediate in catalysis. The interaction with tRNA stretch occupies residues 292 to 293; sequence RY.

It belongs to the MnmA/TRMU family.

The protein resides in the cytoplasm. The catalysed reaction is S-sulfanyl-L-cysteinyl-[protein] + uridine(34) in tRNA + AH2 + ATP = 2-thiouridine(34) in tRNA + L-cysteinyl-[protein] + A + AMP + diphosphate + H(+). Functionally, catalyzes the 2-thiolation of uridine at the wobble position (U34) of tRNA, leading to the formation of s(2)U34. The protein is tRNA-specific 2-thiouridylase MnmA of Hydrogenobaculum sp. (strain Y04AAS1).